Reading from the N-terminus, the 619-residue chain is Replication restart protein PriA (619 aa).

One can recognise a Helicase ATP-binding domain in the interval 119-285 (LKELQKHPAS…KDKALVRLKG (167 aa)). Residue 132–139 (GDTGSGKT) coordinates ATP. The DEAH box motif lies at 228–231 (DEEH). Zn(2+) contacts are provided by Cys-336, Cys-339, Cys-345, Cys-348, Cys-363, Cys-366, Cys-376, and Cys-379. A Helicase C-terminal domain is found at 371 to 532 (PIPKICNACQ…ELYPPFSRLC (162 aa)).

The protein belongs to the helicase family. PriA subfamily. In terms of assembly, component of the replication restart primosome. Zn(2+) serves as cofactor.

It carries out the reaction Couples ATP hydrolysis with the unwinding of duplex DNA by translocating in the 3'-5' direction.. The enzyme catalyses ATP + H2O = ADP + phosphate + H(+). Its function is as follows. Initiates the restart of stalled replication forks, which reloads the replicative helicase on sites other than the origin of replication. Recognizes and binds to abandoned replication forks and remodels them to uncover a helicase loading site. Promotes assembly of the primosome at these replication forks. The sequence is that of Replication restart protein PriA from Helicobacter pylori (strain J99 / ATCC 700824) (Campylobacter pylori J99).